We begin with the raw amino-acid sequence, 210 residues long: 3-hexulose-6-phosphate synthase (210 aa).

Belongs to the HPS/KGPDC family. HPS subfamily.

The enzyme catalyses D-ribulose 5-phosphate + formaldehyde = D-arabino-hex-3-ulose 6-phosphate. It functions in the pathway one-carbon metabolism; formaldehyde assimilation via RuMP pathway; D-fructose 6-phosphate from D-ribulose 5-phosphate and formaldehyde: step 1/2. Catalyzes the condensation of ribulose 5-phosphate with formaldehyde to form 3-hexulose 6-phosphate. This Staphylococcus aureus (strain NCTC 8325 / PS 47) protein is 3-hexulose-6-phosphate synthase.